The following is a 203-amino-acid chain: Small ribosomal subunit protein uS5 (203 aa).

Basic and acidic residues predominate over residues 1–18; that stretch reads MENNVKKETIVDSEKVEK. The segment at 1–36 is disordered; sequence MENNVKKETIVDSEKVEKQQPVTAPVVNKKENTQPK. One can recognise an S5 DRBM domain in the interval 49-112; that stretch reads FEERVVKIKR…KNANNNLIKV (64 aa).

Belongs to the universal ribosomal protein uS5 family. In terms of assembly, part of the 30S ribosomal subunit. Contacts proteins S4 and S8.

In terms of biological role, with S4 and S12 plays an important role in translational accuracy. Functionally, located at the back of the 30S subunit body where it stabilizes the conformation of the head with respect to the body. This chain is Small ribosomal subunit protein uS5, found in Ureaplasma urealyticum serovar 10 (strain ATCC 33699 / Western).